Consider the following 542-residue polypeptide: Bifunctional pantoate ligase/cytidylate kinase (542 aa).

The tract at residues 1–280 (MHWLRTVAAL…VGQTRLIDNL (280 aa)) is pantoate--beta-alanine ligase. 28-35 (MGSLHEGH) is an ATP binding site. The active-site Proton donor is the His-35. Gln-59 is a binding site for (R)-pantoate. Residue Gln-59 participates in beta-alanine binding. ATP is bound at residue 150–153 (GQKD). Gln-156 serves as a coordination point for (R)-pantoate. ATP-binding positions include Val-179 and 187 to 190 (CSSR). Residues 281 to 542 (LLSPEQGDPL…ERSGPARLDQ (262 aa)) are cytidylate kinase. Residues 287 to 311 (GDPLPERVQHAAPPSSGTTSPPRRP) form a disordered region.

This sequence in the N-terminal section; belongs to the pantothenate synthetase family. It in the C-terminal section; belongs to the cytidylate kinase family. Type 1 subfamily.

The protein localises to the cytoplasm. The enzyme catalyses (R)-pantoate + beta-alanine + ATP = (R)-pantothenate + AMP + diphosphate + H(+). It catalyses the reaction CMP + ATP = CDP + ADP. It carries out the reaction dCMP + ATP = dCDP + ADP. Its pathway is cofactor biosynthesis; (R)-pantothenate biosynthesis; (R)-pantothenate from (R)-pantoate and beta-alanine: step 1/1. Its function is as follows. Catalyzes the condensation of pantoate with beta-alanine in an ATP-dependent reaction via a pantoyl-adenylate intermediate. Catalyzes the transfer of a phosphate group from ATP to either CMP or dCMP to form CDP or dCDP and ADP, respectively. In Synechococcus sp. (strain JA-2-3B'a(2-13)) (Cyanobacteria bacterium Yellowstone B-Prime), this protein is Bifunctional pantoate ligase/cytidylate kinase.